A 156-amino-acid polypeptide reads, in one-letter code: Ribosomally synthesized cyclic peptide victorin precursosr vicA1 (156 aa).

Positions 1–21 (MVRITALMSGSILLFALQALA) are cleaved as a signal peptide. Propeptides lie at residues 22 to 36 (MPVETTSVEPAAEKR), 43 to 55 (KRGEEVEPAEEKR), 62 to 74 (KRGEEVEPAEEKR), 81 to 93 (KRGEEVEPAEEKR), 100 to 112 (KRGEEVEPAEEKR), 119 to 131 (KRGEEVEPAEEKR), and 138 to 150 (KRGEEVEPAEEKR).

VicA1 is processed by several endopeptidases including kexin proteases as well as the cluster-specific peptidases vicP1 and vicP2 to produce 7 identical copies of the hexapeptide Gly-Leu-Lys-Leu-Ala-Phe, that are further modified to yield victorins. After being excised from the precursor peptide, the core peptides are cyclized and modified post-translationally by enzymes encoded within the gene cluster. The ustYa family protein vicYb is required for the formation of the macrocycle in victorin and the copper amine oxidases (CAOs) vicK1 and vicK2 are responsible for converting victorin to the active form by oxidizing the N-terminal glycyl residue in the peptides to glyoxylate. Relaxed substrate specificity of enzymes in the victorin biosynthetic pathway results in a metabolic grid that produces a set of analogs including victorinines B, C, E or HV-toxin M.

It functions in the pathway mycotoxin biosynthesis. Ribosomally synthesized cyclic peptide victorin precursor, part of the gene cluster that mediates the biosynthesis of the secondary metabolite victorin, the molecular basis for Victoria blight of oats. The vicA1 translated product contains a 7-fold repeated peptide embedding the hexapeptide Gly-Leu-Lys-Leu-Ala-Phe, that is converted into the cyclic victorin. The protein is Ribosomally synthesized cyclic peptide victorin precursosr vicA1 of Bipolaris victoriae (strain FI3) (Victoria blight of oats agent).